A 148-amino-acid chain; its full sequence is Snaclec stejaggregin-A subunit beta-3 (148 aa).

An N-terminal signal peptide occupies residues 1–23 (MGRFISVSFGLLVVFLSLSGAGA). A disulfide bridge links Cys-27 with Cys-38. Residues 34–145 (YDLYCYKVFK…CSRTHYVVCK (112 aa)) enclose the C-type lectin domain. N-linked (GlcNAc...) asparagine glycosylation is found at Asn-47 and Asn-78. Cystine bridges form between Cys-55–Cys-144 and Cys-121–Cys-136.

The protein belongs to the snaclec family. In terms of assembly, heteromultimer; disulfide-linked. In terms of tissue distribution, expressed by the venom gland.

It localises to the secreted. Functionally, interferes with one step of hemostasis (modulation of platelet aggregation, or coagulation cascade, for example). This is Snaclec stejaggregin-A subunit beta-3 from Trimeresurus stejnegeri (Chinese green tree viper).